Reading from the N-terminus, the 473-residue chain is ATP synthase subunit beta (473 aa).

Gly-158 to Thr-165 is a binding site for ATP.

It belongs to the ATPase alpha/beta chains family. In terms of assembly, F-type ATPases have 2 components, CF(1) - the catalytic core - and CF(0) - the membrane proton channel. CF(1) has five subunits: alpha(3), beta(3), gamma(1), delta(1), epsilon(1). CF(0) has three main subunits: a(1), b(2) and c(9-12). The alpha and beta chains form an alternating ring which encloses part of the gamma chain. CF(1) is attached to CF(0) by a central stalk formed by the gamma and epsilon chains, while a peripheral stalk is formed by the delta and b chains.

It localises to the cell membrane. It carries out the reaction ATP + H2O + 4 H(+)(in) = ADP + phosphate + 5 H(+)(out). Produces ATP from ADP in the presence of a proton gradient across the membrane. The catalytic sites are hosted primarily by the beta subunits. In Geobacillus thermoleovorans (Bacillus thermoleovorans), this protein is ATP synthase subunit beta.